Reading from the N-terminus, the 284-residue chain is Bifunctional protein FolD (284 aa).

Residues 165-167, Ser190, and Ile231 contribute to the NADP(+) site; that span reads GAS.

This sequence belongs to the tetrahydrofolate dehydrogenase/cyclohydrolase family. As to quaternary structure, homodimer.

The catalysed reaction is (6R)-5,10-methylene-5,6,7,8-tetrahydrofolate + NADP(+) = (6R)-5,10-methenyltetrahydrofolate + NADPH. It carries out the reaction (6R)-5,10-methenyltetrahydrofolate + H2O = (6R)-10-formyltetrahydrofolate + H(+). It participates in one-carbon metabolism; tetrahydrofolate interconversion. Its function is as follows. Catalyzes the oxidation of 5,10-methylenetetrahydrofolate to 5,10-methenyltetrahydrofolate and then the hydrolysis of 5,10-methenyltetrahydrofolate to 10-formyltetrahydrofolate. The chain is Bifunctional protein FolD from Polynucleobacter asymbioticus (strain DSM 18221 / CIP 109841 / QLW-P1DMWA-1) (Polynucleobacter necessarius subsp. asymbioticus).